The chain runs to 162 residues: Sec-independent protein translocase protein TatB (162 aa).

A helical transmembrane segment spans residues 1–21 (MFDIGFLEIIVIMVIALIVIG). The tract at residues 86–162 (IQDEFGIDQE…ESTPESSNKS (77 aa)) is disordered. Positions 108–117 (FSGTQFNKAP) are enriched in polar residues. Over residues 123–135 (PTTEESPSSTPET) the composition is skewed to low complexity. Over residues 147-162 (DVSAPSESTPESSNKS) the composition is skewed to polar residues.

This sequence belongs to the TatB family. In terms of assembly, the Tat system comprises two distinct complexes: a TatABC complex, containing multiple copies of TatA, TatB and TatC subunits, and a separate TatA complex, containing only TatA subunits. Substrates initially bind to the TatABC complex, which probably triggers association of the separate TatA complex to form the active translocon.

The protein localises to the cell inner membrane. Functionally, part of the twin-arginine translocation (Tat) system that transports large folded proteins containing a characteristic twin-arginine motif in their signal peptide across membranes. Together with TatC, TatB is part of a receptor directly interacting with Tat signal peptides. TatB may form an oligomeric binding site that transiently accommodates folded Tat precursor proteins before their translocation. This is Sec-independent protein translocase protein TatB from Hydrogenovibrio crunogenus (strain DSM 25203 / XCL-2) (Thiomicrospira crunogena).